The primary structure comprises 286 residues: Polyamine aminopropyltransferase (286 aa).

The PABS domain maps to 5 to 238 (KIWHEKLHRH…GTMMFSWGTD (234 aa)). Residues histidine 64 and aspartate 88 each contribute to the spermidine site. S-methyl-5'-thioadenosine contacts are provided by residues glutamate 108 and 140–141 (NG). Residue aspartate 158 is the Proton acceptor of the active site. 158–161 (DSTD) provides a ligand contact to spermidine.

This sequence belongs to the spermidine/spermine synthase family. As to quaternary structure, homodimer or homotetramer.

It is found in the cytoplasm. It carries out the reaction S-adenosyl 3-(methylsulfanyl)propylamine + putrescine = S-methyl-5'-thioadenosine + spermidine + H(+). It participates in amine and polyamine biosynthesis; spermidine biosynthesis; spermidine from putrescine: step 1/1. Functionally, catalyzes the irreversible transfer of a propylamine group from the amino donor S-adenosylmethioninamine (decarboxy-AdoMet) to putrescine (1,4-diaminobutane) to yield spermidine. The sequence is that of Polyamine aminopropyltransferase from Buchnera aphidicola subsp. Schizaphis graminum (strain Sg).